Here is a 242-residue protein sequence, read N- to C-terminus: Galectin-3 (242 aa).

Residues 1-35 (MADGFSLNDALSGSGHPPNQGWPGPWGNQPAGPGG) form a disordered region. Ala2 is subject to N-acetylalanine. Ser6 carries the phosphoserine; by CK1 modification. A Phosphoserine modification is found at Ser12. The span at 17–31 (PPNQGWPGPWGNQPA) shows a compositional bias: low complexity. Tandem repeats lie at residues 35–43 (GYPGAAYPG), 44–52 (AYPGHAPGA), 53–61 (YPGQAPPGP), and 62–70 (YPGPGAHGA). Residues 35–98 (GYPGAAYPGA…GAGAYPGASP (64 aa)) form a 7 X 9 AA tandem repeats of Y-P-G-X(3)-P-[GS]-A region. The interval 55–93 (GQAPPGPYPGPGAHGAYPGQPGGPGAYPSPGQPSGAGAY) is disordered. A 5; approximate repeat occupies 71-80 (YPGQPGGPGA). Residues 80–93 (AYPSPGQPSGAGAY) are compositionally biased toward low complexity. One copy of the 6; approximate repeat lies at 81–92 (YPSPGQPSGAGA). A 7; truncated repeat occupies 93-98 (YPGASP). Residues 110–240 (YDLPLPGGVM…DIQLTSASHA (131 aa)) enclose the Galectin domain. Residue 173 to 181 (WGREERQTT) participates in a beta-D-galactoside binding. The short motif at 218–233 (RNLKEINKLGISGDIQ) is the Nuclear export signal element.

Probably forms homo- or heterodimers. Interacts with DMBT1. Interacts with CD6 and ALCAM. Forms a complex with the ITGA3, ITGB1 and CSPG4. Interacts with LGALS3BP, LYPD3, ZFTRAF1 and UACA. Interacts with TRIM16; this interaction mediates autophagy of damage endomembranes. Interacts with cargo receptor TMED10; the interaction mediates the translocation from the cytoplasm into the ERGIC (endoplasmic reticulum-Golgi intermediate compartment) and thereby secretion. Interacts with and inhibits by binding NCR3/NKp30.

Its subcellular location is the cytoplasm. The protein resides in the nucleus. The protein localises to the secreted. In terms of biological role, galactose-specific lectin which binds IgE. May mediate with the alpha-3, beta-1 integrin the stimulation by CSPG4 of endothelial cells migration. Together with DMBT1, required for terminal differentiation of columnar epithelial cells during early embryogenesis. In the nucleus: acts as a pre-mRNA splicing factor. Involved in acute inflammatory responses including neutrophil activation and adhesion, chemoattraction of monocytes macrophages, opsonization of apoptotic neutrophils, and activation of mast cells. Together with TRIM16, coordinates the recognition of membrane damage with mobilization of the core autophagy regulators ATG16L1 and BECN1 in response to damaged endomembranes. When secreted, interacts with NK cell-activating receptor NCR3/NKp30 acting as an inhibitory ligand which antagonizes NK cell attack. This is Galectin-3 (LGALS3) from Oryctolagus cuniculus (Rabbit).